Reading from the N-terminus, the 406-residue chain is MQNVEIIYKNAKVRGILINEANGLITIKADNGYNLTFDRSEVEILSRVTIEEKKEKKTEVESFGTGEKSISILATGGTIASRVDYETGAVKPVSDPRLLFGGTELESKFNIRVVNVMNQLSENMKPADWIHLARKVMDETKHSSGIVVSHGTDTMSYTSSALAFMFERLAQPIIFVGSQRSSDRPSSDTKENMEGAINFAATDLGEVGIAMHKGISDGSIVLHRAVRSRKMHTSRRDAFESIDTVHLAEYTSSVRFFSDYRKAEEENLLLDHLDEKVSIIYFHPGLVASDVENMIEGKHAVVIMGTGLGHIAKDLIPVFKNFTKDGNFAIMTSQCIYGSVDMNVYSTGRELIAAGVISAGDMVPEVAYVKAMFTLGNYGREEFINVFNRNLRGEILNRLIPREVYI.

One can recognise an Asparaginase/glutaminase domain in the interval 68–390 (KSISILATGG…EEFINVFNRN (323 aa)). Residues T78, T152, D153, and K230 contribute to the active site.

The protein belongs to the asparaginase 1 family. GatD subfamily. Heterodimer of GatD and GatE.

The enzyme catalyses L-glutamyl-tRNA(Gln) + L-glutamine + ATP + H2O = L-glutaminyl-tRNA(Gln) + L-glutamate + ADP + phosphate + H(+). Functionally, allows the formation of correctly charged Gln-tRNA(Gln) through the transamidation of misacylated Glu-tRNA(Gln) in organisms which lack glutaminyl-tRNA synthetase. The reaction takes place in the presence of glutamine and ATP through an activated gamma-phospho-Glu-tRNA(Gln). The GatDE system is specific for glutamate and does not act on aspartate. In Thermoplasma volcanium (strain ATCC 51530 / DSM 4299 / JCM 9571 / NBRC 15438 / GSS1), this protein is Glutamyl-tRNA(Gln) amidotransferase subunit D.